The primary structure comprises 274 residues: Penicillin-insensitive murein endopeptidase (274 aa).

An N-terminal signal peptide occupies residues 1–19 (MNKTAIALLALLASSASLA). Intrachain disulfides connect Cys44–Cys265, Cys187–Cys235, and Cys216–Cys223. Residues His110, His113, Asp120, Asp147, His150, and His211 each coordinate Zn(2+). Residues 227–274 (PLPPPGDGCGAELQSWFEPPKPGTTKPEKKTPPPLPPSCQALLDEHVI) are disordered.

Belongs to the peptidase M74 family. Dimer. It depends on Zn(2+) as a cofactor.

It localises to the periplasm. Its function is as follows. Murein endopeptidase that cleaves the D-alanyl-meso-2,6-diamino-pimelyl amide bond that connects peptidoglycan strands. Likely plays a role in the removal of murein from the sacculus. This Escherichia coli (strain SE11) protein is Penicillin-insensitive murein endopeptidase.